The sequence spans 233 residues: Phosphoglycolate phosphatase 2 (233 aa).

D13 (nucleophile) is an active-site residue. Positions 13 and 15 each coordinate Mg(2+). K152 is a substrate binding site. 2 residues coordinate Mg(2+): D174 and D178.

This sequence belongs to the archaeal SPP-like hydrolase family. The cofactor is Mg(2+).

The enzyme catalyses 2-phosphoglycolate + H2O = glycolate + phosphate. Catalyzes the dephosphorylation of 2-phosphoglycolate. The chain is Phosphoglycolate phosphatase 2 from Saccharolobus solfataricus (strain ATCC 35092 / DSM 1617 / JCM 11322 / P2) (Sulfolobus solfataricus).